The following is a 263-amino-acid chain: Lens fiber major intrinsic protein (263 aa).

Residues 1–9 (MWELRSASF) lie on the Cytoplasmic side of the membrane. A helical membrane pass occupies residues 10–29 (WRAIFAEFFATLFYVFFGLG). At 30 to 41 (SSLRWAPGPLHV) the chain is on the extracellular side. A helical transmembrane segment spans residues 42 to 59 (LQVALAFGLALATLVQTV). The Cytoplasmic segment spans residues 60–61 (GH). The segment at residues 62–77 (ISGAHVNPAVTFAFLV) is an intramembrane region (discontinuously helical). Positions 68 to 70 (NPA) match the NPA 1 motif. Residues 78–82 (GSQMS) are Cytoplasmic-facing. Residues 83–106 (LLRAFCYIAAQLLGAVAGAAVLYS) traverse the membrane as a helical segment. The Extracellular segment spans residues 107–127 (VTPPAVRGNLALNTLHAGVSV). The helical transmembrane segment at 128-148 (GQATTVEIFLTLQFVLCIFAT) threads the bilayer. The Cytoplasmic segment spans residues 149-156 (YDERRNGR). The helical transmembrane segment at 157–175 (MGSVALAVGFSLTLGHLFG) threads the bilayer. Residues 176–178 (MYY) are Extracellular-facing. Positions 179–193 (TGAGMNPARSFAPAI) form an intramembrane region, discontinuously helical. An NPA 2 motif is present at residues 184-186 (NPA). Residues 194–200 (LTRNFSN) lie on the Extracellular side of the membrane. The helical transmembrane segment at 201–222 (HWVYWVGPIIGGGLGSLLYDFL) threads the bilayer. The Cytoplasmic segment spans residues 223–263 (LFPRLKSVSERLSILKGARPSDSNGQPEGTGEPVELKTQAL). Residues 227 to 237 (LKSVSERLSIL) are interaction with CALM. Serine 235, serine 243, and serine 245 each carry phosphoserine. The disordered stretch occupies residues 240-263 (ARPSDSNGQPEGTGEPVELKTQAL). Asparagine 246 carries the deamidated asparagine modification.

Belongs to the MIP/aquaporin (TC 1.A.8) family. As to quaternary structure, homotetramer; each monomer provides an independent water pore. Two homotetramers on opposing membranes can dimerize, forming a cell-cell junction. Interacts with CALM; the calcium-calmodulin/CALM complex interacts with the cytoplasmic domains of two aquaporins, leading to channel closure. Interacts with BFSP1 (via C-terminus); prevents calcium-dependent inhibition of the water channel activity. In terms of processing, subject to partial proteolytic cleavage in the eye lens core. Partial proteolysis promotes interactions between tetramers from adjoining membranes. Fatty acylated at Met-1 and Lys-238. The acyl modifications, in decreasing order of ion abundance, are: oleoyl (C18:1) &gt; palmitoyl (C16:0) &gt; stearoyl (C18:0) &gt; eicosenoyl (C20:1) &gt; dihomo-gamma-linolenoyl (C20:3) &gt; palmitoleoyl (C16:1) &gt; eicosadienoyl (C20:2).

Its subcellular location is the cell membrane. The protein resides in the cell junction. It catalyses the reaction H2O(in) = H2O(out). The water channel activity is inhibited by calcium through calmodulin/CALM. Its function is as follows. Aquaporins form homotetrameric transmembrane channels, with each monomer independently mediating water transport across the plasma membrane along its osmotic gradient. Specifically expressed in lens fiber cells, this aquaporin is crucial for maintaining lens water homeostasis and transparency. Beyond water permeability, it also acts as a cell-to-cell adhesion molecule, forming thin junctions between lens fiber cells that are essential for maintaining the ordered structure and transparency of the lens. In Rattus norvegicus (Rat), this protein is Lens fiber major intrinsic protein.